The primary structure comprises 90 residues: Elongation factor 1-beta (90 aa).

Belongs to the EF-1-beta/EF-1-delta family.

Functionally, promotes the exchange of GDP for GTP in EF-1-alpha/GDP, thus allowing the regeneration of EF-1-alpha/GTP that could then be used to form the ternary complex EF-1-alpha/GTP/AAtRNA. In Aeropyrum pernix (strain ATCC 700893 / DSM 11879 / JCM 9820 / NBRC 100138 / K1), this protein is Elongation factor 1-beta (ef1b).